A 544-amino-acid chain; its full sequence is MAKQIVFNEEARRALERGVNALAESVRVTLGPKGRNVVLDKKFGAPLITNDGVTIAREIELEDPFENMGAQLVKEVATKTNDVAGDGTTTATVLAQAIIREGLKNVAAGANPMGIKRGIEKAVESVVEDIKTNAKPIESKESIAQVASISAGDDNIGVLISDAMEKVGKDGVITVEEAKGMTTELKVVEGMQFDRGYLSAYMITDTDKMEAILNDPYILITDKKIGAIADILPVLEKVVQAGRQLLIIAEDIEGEALATLILNKLRGTFTCVAVKAPGFGDRRKAMLEDIAILTGGTVITEDLGLKLENTTIDMLGRARQIRVTKEETTIVEGSGSQDDIKSRVEAIKKQIDETTSDFDREKLQERLAKLAGGVAVIQVGAATEVEMKEKKLRIEDALAATRAAVEEGIVAGGGCALVDAAKALDSLKLTGDEKTGVAIVCRALEEPLRQIANNAGFEGSIVVEKVRNGGRGVGFNALTEAYEDMIAAGIVDPAKVTRSALQNAASIAAMLLTTECLVSDIPSKDNGAAAMAGMGGMGGMGGMM.

Residues 29–32 (TLGP), 86–90 (DGTTT), Gly413, 476–478 (NAL), and Asp492 each bind ATP.

Belongs to the chaperonin (HSP60) family. Forms a cylinder of 14 subunits composed of two heptameric rings stacked back-to-back. Interacts with the co-chaperonin GroES.

The protein localises to the cytoplasm. It catalyses the reaction ATP + H2O + a folded polypeptide = ADP + phosphate + an unfolded polypeptide.. Functionally, together with its co-chaperonin GroES, plays an essential role in assisting protein folding. The GroEL-GroES system forms a nano-cage that allows encapsulation of the non-native substrate proteins and provides a physical environment optimized to promote and accelerate protein folding. In Desulfitobacterium hafniense (strain DSM 10664 / DCB-2), this protein is Chaperonin GroEL.